A 104-amino-acid polypeptide reads, in one-letter code: NADH-quinone oxidoreductase subunit K (104 aa).

The next 3 membrane-spanning stretches (helical) occupy residues 4-24 (VPAS…LFGA), 31-51 (VIVL…LVAF), and 67-87 (LFTM…LIAL).

This sequence belongs to the complex I subunit 4L family. NDH-1 is composed of 14 different subunits. Subunits NuoA, H, J, K, L, M, N constitute the membrane sector of the complex.

It is found in the cell membrane. It carries out the reaction a quinone + NADH + 5 H(+)(in) = a quinol + NAD(+) + 4 H(+)(out). NDH-1 shuttles electrons from NADH, via FMN and iron-sulfur (Fe-S) centers, to quinones in the respiratory chain. The immediate electron acceptor for the enzyme in this species is believed to be a menaquinone. Couples the redox reaction to proton translocation (for every two electrons transferred, four hydrogen ions are translocated across the cytoplasmic membrane), and thus conserves the redox energy in a proton gradient. The sequence is that of NADH-quinone oxidoreductase subunit K from Bacillus cereus (strain ATCC 14579 / DSM 31 / CCUG 7414 / JCM 2152 / NBRC 15305 / NCIMB 9373 / NCTC 2599 / NRRL B-3711).